A 633-amino-acid polypeptide reads, in one-letter code: Chaperone protein HtpG (633 aa).

Residues 1-345 (MSADTQSETL…SDDLPLNISR (345 aa)) are a; substrate-binding. A b region spans residues 346–562 (EMLQHNPMIS…EYDFGMGMQR (217 aa)). The interval 563 to 633 (LLQAAGHQLP…VRRVNNLLAG (71 aa)) is c.

It belongs to the heat shock protein 90 family. As to quaternary structure, homodimer.

The protein localises to the cytoplasm. Molecular chaperone. Has ATPase activity. The protein is Chaperone protein HtpG of Halorhodospira halophila (strain DSM 244 / SL1) (Ectothiorhodospira halophila (strain DSM 244 / SL1)).